Consider the following 514-residue polypeptide: 2-isopropylmalate synthase (514 aa).

In terms of domain architecture, Pyruvate carboxyltransferase spans Leu5–Val268. Residues Asp14, His202, His204, and Asn239 each contribute to the Mn(2+) site. The tract at residues Lys395–Ser514 is regulatory domain.

Belongs to the alpha-IPM synthase/homocitrate synthase family. LeuA type 1 subfamily. As to quaternary structure, homodimer. It depends on Mn(2+) as a cofactor.

It localises to the cytoplasm. The enzyme catalyses 3-methyl-2-oxobutanoate + acetyl-CoA + H2O = (2S)-2-isopropylmalate + CoA + H(+). Its pathway is amino-acid biosynthesis; L-leucine biosynthesis; L-leucine from 3-methyl-2-oxobutanoate: step 1/4. Catalyzes the condensation of the acetyl group of acetyl-CoA with 3-methyl-2-oxobutanoate (2-ketoisovalerate) to form 3-carboxy-3-hydroxy-4-methylpentanoate (2-isopropylmalate). In Burkholderia cenocepacia (strain ATCC BAA-245 / DSM 16553 / LMG 16656 / NCTC 13227 / J2315 / CF5610) (Burkholderia cepacia (strain J2315)), this protein is 2-isopropylmalate synthase.